The chain runs to 557 residues: MNKLRSSAITQGVQRSPNRSMLRAVGFNDEDFNKPIIGVANGYSTITPCNIGLNKLALKAEESIRRSGGMPQKFGTITVSDGISMGTEGMKYSLVSREVIADSIETACNAQSMDAVLAIGGCDKNMPGAMIAIARMNIPSIFIYGGTIKPGKLHGEDLTVVSAFEAVGQLTSGKINEKRLIEVEKNCIPGAGSCGGMFTANTMSAVIEVLGLSLPHSSTMAAEDLEKELSAEKSAEILVSAIKKNIRPLDLMTKKAFENAISVIMAVGGSTNAVLHILAIANTAGIDINIDDFERIRQKVPVICDLKPSGKFVTVDLHNAGGIPQVMKILLNAGLIHGECKNIEGKTITEYLQNIPDKPPSNQNVIRGIDYPLYKKGHLAILKGNLAKEGSVAKISGVKNPVLTGPAKIFESEEDCLKAILNNEIIAGDVVVVRNEGPVGGPGMREMLSPTSAIVGQGLGEKVALITDGRFSGGSYGLVVGHIAPEAAVGGNIALIKEGDLITVDAVKQLIEVDLSDEELEKRKNNWVKPKPKYKRGILSKYSKIVSTSSLGAVTDL.

Residue C49 participates in [2Fe-2S] cluster binding. D81 provides a ligand contact to Mg(2+). C122 is a binding site for [2Fe-2S] cluster. Residues D123 and K124 each coordinate Mg(2+). Position 124 is an N6-carboxylysine (K124). Position 194 (C194) interacts with [2Fe-2S] cluster. Residue E446 participates in Mg(2+) binding. The active-site Proton acceptor is the S472.

The protein belongs to the IlvD/Edd family. Homodimer. [2Fe-2S] cluster serves as cofactor. The cofactor is Mg(2+).

The catalysed reaction is (2R)-2,3-dihydroxy-3-methylbutanoate = 3-methyl-2-oxobutanoate + H2O. It catalyses the reaction (2R,3R)-2,3-dihydroxy-3-methylpentanoate = (S)-3-methyl-2-oxopentanoate + H2O. It participates in amino-acid biosynthesis; L-isoleucine biosynthesis; L-isoleucine from 2-oxobutanoate: step 3/4. Its pathway is amino-acid biosynthesis; L-valine biosynthesis; L-valine from pyruvate: step 3/4. Its function is as follows. Functions in the biosynthesis of branched-chain amino acids. Catalyzes the dehydration of (2R,3R)-2,3-dihydroxy-3-methylpentanoate (2,3-dihydroxy-3-methylvalerate) into 2-oxo-3-methylpentanoate (2-oxo-3-methylvalerate) and of (2R)-2,3-dihydroxy-3-methylbutanoate (2,3-dihydroxyisovalerate) into 2-oxo-3-methylbutanoate (2-oxoisovalerate), the penultimate precursor to L-isoleucine and L-valine, respectively. The chain is Dihydroxy-acid dehydratase from Prochlorococcus marinus (strain MIT 9215).